Reading from the N-terminus, the 359-residue chain is UDP-N-acetylglucosamine--N-acetylmuramyl-(pentapeptide) pyrophosphoryl-undecaprenol N-acetylglucosamine transferase (359 aa).

Residues 15–17 (TGG), Asn127, Arg166, Ser191, Ile245, 264–269 (ALTVSE), and Gln290 each bind UDP-N-acetyl-alpha-D-glucosamine.

It belongs to the glycosyltransferase 28 family. MurG subfamily.

Its subcellular location is the cell inner membrane. The catalysed reaction is di-trans,octa-cis-undecaprenyl diphospho-N-acetyl-alpha-D-muramoyl-L-alanyl-D-glutamyl-meso-2,6-diaminopimeloyl-D-alanyl-D-alanine + UDP-N-acetyl-alpha-D-glucosamine = di-trans,octa-cis-undecaprenyl diphospho-[N-acetyl-alpha-D-glucosaminyl-(1-&gt;4)]-N-acetyl-alpha-D-muramoyl-L-alanyl-D-glutamyl-meso-2,6-diaminopimeloyl-D-alanyl-D-alanine + UDP + H(+). It participates in cell wall biogenesis; peptidoglycan biosynthesis. Functionally, cell wall formation. Catalyzes the transfer of a GlcNAc subunit on undecaprenyl-pyrophosphoryl-MurNAc-pentapeptide (lipid intermediate I) to form undecaprenyl-pyrophosphoryl-MurNAc-(pentapeptide)GlcNAc (lipid intermediate II). The protein is UDP-N-acetylglucosamine--N-acetylmuramyl-(pentapeptide) pyrophosphoryl-undecaprenol N-acetylglucosamine transferase of Pseudomonas putida (strain ATCC 700007 / DSM 6899 / JCM 31910 / BCRC 17059 / LMG 24140 / F1).